We begin with the raw amino-acid sequence, 342 residues long: Strictosidine synthase (342 aa).

The first 20 residues, 1 to 20, serve as a signal peptide directing secretion; sequence KLSDSQTMALFTVFLLFLSS. A glycan (N-linked (GlcNAc...) asparagine) is linked at Asn-89.

This sequence belongs to the strictosidine synthase family. As to quaternary structure, monomer.

The protein localises to the vacuole. The enzyme catalyses 3alpha(S)-strictosidine + H2O = secologanin + tryptamine. It participates in alkaloid biosynthesis; 3alpha(S)-strictosidine biosynthesis; 3alpha(S)-strictosidine from secologanin and tryptamine: step 1/1. Its function is as follows. Catalyzes the stereospecific condensation of tryptamine with secologanin to form strictosidine, the key intermediate of indole alkaloid biosynthesis. The sequence is that of Strictosidine synthase (STR1) from Rauvolfia mannii.